Here is a 277-residue protein sequence, read N- to C-terminus: MNEAIHVQGLNKTFSHKSALIDLALSIQPGEMVALIGASGSGKSTLLRHLAGLACCDRSNGGQVQVLGREVQSSGRLNSQVRRLRADIGYIFQQFNLVNRLSVLDNVLLGCLGRMPRWRGSLALFNNEEKQRAMVALERVGLADLAAQRASTLSGGQQQRVAIARALTQRAEVILADEPIASLDPESARRVMEILADINRRDGKTVVVTLHQVDYAVRYCPRAVALKSGRIHFDGQAQDLSKQFLNDLYGADADASLMITERSQRVRQKARLTLAKV.

In terms of domain architecture, ABC transporter spans 5-253 (IHVQGLNKTF…FLNDLYGADA (249 aa)). Residue 37 to 44 (GASGSGKS) coordinates ATP.

This sequence belongs to the ABC transporter superfamily. Phosphonates importer (TC 3.A.1.9.1) family. In terms of assembly, the complex is composed of two ATP-binding proteins (PhnC), two transmembrane proteins (PhnE) and a solute-binding protein (PhnD).

It is found in the cell inner membrane. The catalysed reaction is phosphonate(out) + ATP + H2O = phosphonate(in) + ADP + phosphate + H(+). In terms of biological role, part of the ABC transporter complex PhnCDE involved in phosphonates import. Responsible for energy coupling to the transport system. The polypeptide is Phosphonates import ATP-binding protein PhnC 2 (Pseudomonas syringae pv. syringae (strain B728a)).